The chain runs to 168 residues: Cytochrome c-type biogenesis protein CcmE (168 aa).

The Cytoplasmic segment spans residues 1 to 7 (MTRKQRR). A helical; Signal-anchor for type II membrane protein membrane pass occupies residues 8-28 (LMLIGVCGAVLAVALGLVLWA). Residues 29-168 (MRGTIVFFRS…SGEKPALRQQ (140 aa)) lie on the Periplasmic side of the membrane. Heme-binding residues include histidine 122 and tyrosine 126. Residues 134–168 (ALKKQGHWQGEAKHPGGTAPAPQTASGEKPALRQQ) are disordered.

This sequence belongs to the CcmE/CycJ family.

The protein localises to the cell inner membrane. Functionally, heme chaperone required for the biogenesis of c-type cytochromes. Transiently binds heme delivered by CcmC and transfers the heme to apo-cytochromes in a process facilitated by CcmF and CcmH. In Methylobacterium nodulans (strain LMG 21967 / CNCM I-2342 / ORS 2060), this protein is Cytochrome c-type biogenesis protein CcmE.